The chain runs to 218 residues: UPF0502 protein Shewana3_1622 (218 aa).

Belongs to the UPF0502 family.

The chain is UPF0502 protein Shewana3_1622 from Shewanella sp. (strain ANA-3).